A 141-amino-acid chain; its full sequence is Hydroperoxide reductase (141 aa).

The protein belongs to the OsmC/Ohr family. Homodimer.

It localises to the cytoplasm. Functionally, reduces organic and inorganic peroxide substrates. Protects the cell against oxidative stress. This is Hydroperoxide reductase from Mycoplasma pneumoniae (strain ATCC 29342 / M129 / Subtype 1) (Mycoplasmoides pneumoniae).